The sequence spans 255 residues: Acetylglutamate kinase (255 aa).

Substrate contacts are provided by residues G40–G41, R62, and N153.

This sequence belongs to the acetylglutamate kinase family. ArgB subfamily.

The protein localises to the cytoplasm. The enzyme catalyses N-acetyl-L-glutamate + ATP = N-acetyl-L-glutamyl 5-phosphate + ADP. It functions in the pathway amino-acid biosynthesis; L-arginine biosynthesis; N(2)-acetyl-L-ornithine from L-glutamate: step 2/4. Functionally, catalyzes the ATP-dependent phosphorylation of N-acetyl-L-glutamate. The sequence is that of Acetylglutamate kinase from Bacillus mycoides (strain KBAB4) (Bacillus weihenstephanensis).